The following is an 806-amino-acid chain: Acetyl-CoA decarbonylase/synthase complex subunit alpha 1 (806 aa).

The [4Fe-4S] cluster site is built by cysteine 73, cysteine 76, cysteine 77, cysteine 79, cysteine 84, and cysteine 94. Histidine 117 lines the CO pocket. The [Ni-4Fe-4S] cluster site is built by histidine 250, cysteine 278, and cysteine 323. 2 4Fe-4S ferredoxin-type domains span residues 406-436 (SDEQLKEWVDKCADCGACYLACPIELDIPEA) and 445-475 (FSYLEDLHDACIGCRRCEQVCKKEIPILSVI). 8 residues coordinate [4Fe-4S] cluster: cysteine 417, cysteine 420, cysteine 423, cysteine 427, cysteine 455, cysteine 458, cysteine 461, and cysteine 465. [Ni-4Fe-4S] cluster contacts are provided by cysteine 523, cysteine 552, and cysteine 587.

It belongs to the Ni-containing carbon monoxide dehydrogenase family. Heterotetramer of two alpha and two epsilon subunits. The ACDS complex is made up of alpha, epsilon, beta, gamma and delta subunits with a probable stoichiometry of (alpha(2)epsilon(2))(4)-beta(8)-(gamma(1)delta(1))(8). The cofactor is [4Fe-4S] cluster. It depends on [Ni-4Fe-4S] cluster as a cofactor.

It catalyses the reaction CO + 2 oxidized [2Fe-2S]-[ferredoxin] + H2O = 2 reduced [2Fe-2S]-[ferredoxin] + CO2 + 2 H(+). It functions in the pathway one-carbon metabolism; methanogenesis from acetate. In terms of biological role, part of the ACDS complex that catalyzes the reversible cleavage of acetyl-CoA, allowing growth on acetate as sole source of carbon and energy. The alpha-epsilon subcomponent functions as a carbon monoxide dehydrogenase. The protein is Acetyl-CoA decarbonylase/synthase complex subunit alpha 1 of Methanosarcina mazei (strain ATCC BAA-159 / DSM 3647 / Goe1 / Go1 / JCM 11833 / OCM 88) (Methanosarcina frisia).